The chain runs to 130 residues: Glutamate-rich protein 4 (130 aa).

Over residues 91-104 (EEEEESSKEEEEDQ) the composition is skewed to acidic residues. A disordered region spans residues 91 to 130 (EEEEESSKEEEEDQEPQRKQEEEHLEACPAPHPPDFEMMI). The segment covering 105-116 (EPQRKQEEEHLE) has biased composition (basic and acidic residues).

The sequence is that of Glutamate-rich protein 4 (ERICH4) from Homo sapiens (Human).